The sequence spans 400 residues: Large envelope protein (400 aa).

Met-1 bears the N-acetylmethionine mark. Disordered stretches follow at residues 1 to 20 (MGGW…SVPN) and 85 to 114 (LTPV…PLRD). Gly-2 is lipidated: N-myristoyl glycine; by host. Positions 2–119 (GGWSSKPRKG…PPLRDSHPQA (118 aa)) are pre-S1. A pre-S region spans residues 2 to 174 (GGWSSKPRKG…SARTGDPVTN (173 aa)). Residues 2–181 (GGWSSKPRKG…VTNMENITSG (180 aa)) are Virion surface; in external conformation-facing. Residues 2-253 (GGWSSKPRKG…PGYRWMCLRR (252 aa)) are Intravirion; in internal conformation-facing. N-linked (GlcNAc...) asparagine glycosylation occurs at Trp-4. Residues 97–106 (ANRQSGRQPT) show a composition bias toward polar residues. A pre-S2 region spans residues 120–174 (MQWNSTAFHQALQDPRVRGLYFPAGGSSSGTVNPAPNIASHISSISARTGDPVTN). The helical transmembrane segment at 182–202 (FLGPLPVLQAGFFLLTRILTI) threads the bilayer. The Intravirion; in external conformation portion of the chain corresponds to 203–253 (PQSLDSWWTSLNFLGGSPVCLGQNSRSPTSNHSPTSCPPICPGYRWMCLRR). The chain crosses the membrane as a helical span at residues 254-274 (FIIFLFILLLCLIFLLVLLDY). Residues 275–348 (QGMLPVCPLI…WASVRFSWLS (74 aa)) lie on the Virion surface side of the membrane. Asn-320 is a glycosylation site (N-linked (GlcNAc...) asparagine; by host). The helical transmembrane segment at 349–369 (LLVPFVQWFVGLSPTVWLSAI) threads the bilayer. At 370-375 (WMMWYW) the chain is on the intravirion side. A helical membrane pass occupies residues 376 to 398 (GPSLYSIVSSFIPLLPIFFCLWV). At 399 to 400 (YI) the chain is on the virion surface side.

It belongs to the orthohepadnavirus major surface antigen family. In its internal form (Li-HBsAg), interacts with the capsid protein and with the isoform S. Interacts with host chaperone CANX. In terms of assembly, associates with host chaperone CANX through its pre-S2 N glycan; this association may be essential for isoform M proper secretion. As to quaternary structure, interacts with isoform L. Interacts with the antigens of satellite virus HDV (HDVAgs); this interaction is required for encapsidation of HDV genomic RNA. Isoform M is N-terminally acetylated by host at a ratio of 90%, and N-glycosylated by host at the pre-S2 region. Post-translationally, myristoylated.

It is found in the virion membrane. In terms of biological role, the large envelope protein exists in two topological conformations, one which is termed 'external' or Le-HBsAg and the other 'internal' or Li-HBsAg. In its external conformation the protein attaches the virus to cell receptors and thereby initiating infection. This interaction determines the species specificity and liver tropism. This attachment induces virion internalization predominantly through caveolin-mediated endocytosis. The large envelope protein also assures fusion between virion membrane and endosomal membrane. In its internal conformation the protein plays a role in virion morphogenesis and mediates the contact with the nucleocapsid like a matrix protein. Its function is as follows. The middle envelope protein plays an important role in the budding of the virion. It is involved in the induction of budding in a nucleocapsid independent way. In this process the majority of envelope proteins bud to form subviral lipoprotein particles of 22 nm of diameter that do not contain a nucleocapsid. This is Large envelope protein from Homo sapiens (Human).